A 1218-amino-acid chain; its full sequence is Cytosolic carboxypeptidase 1 (1218 aa).

Disordered regions lie at residues 476 to 512 (VVMKERASPKGEEAKEDPKGHDRTLPQQLGGQSRVAP) and 590 to 617 (TEDDEDTESHSSTEQAPSVEASDGPTLH). Residues 477-499 (VMKERASPKGEEAKEDPKGHDRT) are compositionally biased toward basic and acidic residues. One can recognise a Peptidase M14 domain in the interval 840-1130 (YPYTYSTLQM…KFCVGLLRLK (291 aa)). Residues His912, Glu915, and His1009 each contribute to the Zn(2+) site. Residue Glu1094 is the Proton donor/acceptor of the active site. Ser1160 is subject to Phosphoserine. A disordered region spans residues 1193–1218 (ENTGDYEPSAQEEALSDSEVSRTHLI).

The protein belongs to the peptidase M14 family. As to quaternary structure, interacts with MYLK. Zn(2+) is required as a cofactor. Widely expressed. Highly expressed in the cerebellum and cortex of adult mouse brain. Expressed at similar levels in both the cerebellum and the cortex throughout all developmental stages. Also expressed in sciatic nerve transection, spinal motor neurons undergoing axon regeneration, testis, heart, eye, lung, pancreas, intestine, stomach, pituitary, spleen, adrenal, kidney and in developing brain. Expression in cranial motor nuclei is the same as that observed in uninjured primary motor neurons. Expression is prevalent in sensory neurons and hippocampal CA3 neurons in addition to regenerating motor neurons.

Its subcellular location is the cytoplasm. The protein localises to the cytosol. The protein resides in the nucleus. It is found in the mitochondrion. The catalysed reaction is (L-glutamyl)(n+1)-gamma-L-glutamyl-L-glutamyl-[protein] + H2O = (L-glutamyl)(n)-gamma-L-glutamyl-L-glutamyl-[protein] + L-glutamate. The enzyme catalyses C-terminal L-alpha-aminoacyl-L-glutamyl-L-glutamyl-[tubulin] + H2O = C-terminal L-alpha-aminoacyl-L-glutamyl-[tubulin] + L-glutamate. Its function is as follows. Metallocarboxypeptidase that mediates protein deglutamylation of tubulin and non-tubulin target proteins. Catalyzes the removal of polyglutamate side chains present on the gamma-carboxyl group of glutamate residues within the C-terminal tail of alpha- and beta-tubulin. Specifically cleaves tubulin long-side-chains, while it is not able to remove the branching point glutamate. Also catalyzes the removal of polyglutamate residues from the carboxy-terminus of alpha-tubulin as well as non-tubulin proteins such as MYLK. Involved in KLF4 deglutamylation which promotes KLF4 proteasome-mediated degradation, thereby negatively regulating cell pluripotency maintenance and embryogenesis. The chain is Cytosolic carboxypeptidase 1 from Mus musculus (Mouse).